A 308-amino-acid chain; its full sequence is Thymidylate synthase (308 aa).

DUMP-binding positions include arginine 26 and 170–171 (RR). Residue cysteine 190 is the Nucleophile of the active site. DUMP is bound by residues 210–213 (RSCD), asparagine 221, and 251–253 (HVY). Aspartate 213 contacts (6R)-5,10-methylene-5,6,7,8-tetrahydrofolate. Alanine 307 is a (6R)-5,10-methylene-5,6,7,8-tetrahydrofolate binding site.

This sequence belongs to the thymidylate synthase family. Bacterial-type ThyA subfamily. As to quaternary structure, homodimer.

It localises to the cytoplasm. The catalysed reaction is dUMP + (6R)-5,10-methylene-5,6,7,8-tetrahydrofolate = 7,8-dihydrofolate + dTMP. The protein operates within pyrimidine metabolism; dTTP biosynthesis. Functionally, catalyzes the reductive methylation of 2'-deoxyuridine-5'-monophosphate (dUMP) to 2'-deoxythymidine-5'-monophosphate (dTMP) while utilizing 5,10-methylenetetrahydrofolate (mTHF) as the methyl donor and reductant in the reaction, yielding dihydrofolate (DHF) as a by-product. This enzymatic reaction provides an intracellular de novo source of dTMP, an essential precursor for DNA biosynthesis. The polypeptide is Thymidylate synthase (Rhizorhabdus wittichii (strain DSM 6014 / CCUG 31198 / JCM 15750 / NBRC 105917 / EY 4224 / RW1) (Sphingomonas wittichii)).